We begin with the raw amino-acid sequence, 394 residues long: 1-deoxy-D-xylulose 5-phosphate reductoisomerase (394 aa).

The NADPH site is built by Thr-10, Gly-11, Ser-12, Ile-13, Gly-38, Arg-39, Asn-40, and Asn-123. Residue Lys-124 coordinates 1-deoxy-D-xylulose 5-phosphate. An NADPH-binding site is contributed by Glu-125. Asp-149 contributes to the Mn(2+) binding site. Positions 150, 151, 175, and 198 each coordinate 1-deoxy-D-xylulose 5-phosphate. Glu-151 is a Mn(2+) binding site. Gly-204 contacts NADPH. Positions 211, 216, 217, and 220 each coordinate 1-deoxy-D-xylulose 5-phosphate. Glu-220 serves as a coordination point for Mn(2+).

This sequence belongs to the DXR family. Mg(2+) serves as cofactor. Requires Mn(2+) as cofactor.

The catalysed reaction is 2-C-methyl-D-erythritol 4-phosphate + NADP(+) = 1-deoxy-D-xylulose 5-phosphate + NADPH + H(+). It functions in the pathway isoprenoid biosynthesis; isopentenyl diphosphate biosynthesis via DXP pathway; isopentenyl diphosphate from 1-deoxy-D-xylulose 5-phosphate: step 1/6. Catalyzes the NADPH-dependent rearrangement and reduction of 1-deoxy-D-xylulose-5-phosphate (DXP) to 2-C-methyl-D-erythritol 4-phosphate (MEP). The sequence is that of 1-deoxy-D-xylulose 5-phosphate reductoisomerase from Cereibacter sphaeroides (strain KD131 / KCTC 12085) (Rhodobacter sphaeroides).